A 100-amino-acid chain; its full sequence is Suppressor of silencing 2b (100 aa).

Positions 22–27 (KRRRRR) match the Nuclear localization signal motif.

This sequence belongs to the cucumovirus/ilarvirus protein 2b family. Homotetramer. Interacts with host AGO1; this interaction blocks AGO1 cleavage activity to attenuate RNA silencing and thus counter host defense. Interacts with host JAZ.

It is found in the host nucleus. Functionally, multifunctional protein that plays two independent roles: viral suppressor of host RNAi (VSR) and viral inducer of host attractiveness to insect vectors (VIA). Acts as a suppressor of RNA-mediated gene silencing, also known as post-transcriptional gene silencing (PTGS), a mechanism of plant viral defense that limits the accumulation of viral RNAs. May directly interfere with mobile silencing signaling. Also inhibits signal transduction by the phytohormone jasmonate, making the infected plant more attractive to aphids, which are the second host to play a role as a dissemination vector. Acts by binding to and inhibiting JAZ degradation in the host. The polypeptide is Suppressor of silencing 2b (Cucumis sativus (Cucumber)).